We begin with the raw amino-acid sequence, 121 residues long: MNPKRCAACKYLRRRCPKDCVFSPYFPPNDPQKFACVHRIYGAGNVSKMLQQLPDQTRAEAVESLCFEAKCRVDDPVYGCVGIIHLLKTQIQKTQNELAKTQAEIAVAQTKLSQTHISDFM.

In terms of domain architecture, LOB spans 4–105 (KRCAACKYLR…NELAKTQAEI (102 aa)).

This sequence belongs to the LOB domain-containing protein family.

The sequence is that of LOB domain-containing protein 23 (LBD23) from Arabidopsis thaliana (Mouse-ear cress).